We begin with the raw amino-acid sequence, 185 residues long: Photosystem I assembly protein Ycf4 (185 aa).

2 consecutive transmembrane segments (helical) span residues 24-44 (YIIG…SISS) and 66-86 (IIMG…WYLV).

Belongs to the Ycf4 family.

The protein localises to the cellular thylakoid membrane. Functionally, seems to be required for the assembly of the photosystem I complex. This chain is Photosystem I assembly protein Ycf4, found in Prochlorococcus marinus (strain AS9601).